The primary structure comprises 186 residues: Elongation factor P (186 aa).

The protein belongs to the elongation factor P family.

It is found in the cytoplasm. It functions in the pathway protein biosynthesis; polypeptide chain elongation. Its function is as follows. Involved in peptide bond synthesis. Stimulates efficient translation and peptide-bond synthesis on native or reconstituted 70S ribosomes in vitro. Probably functions indirectly by altering the affinity of the ribosome for aminoacyl-tRNA, thus increasing their reactivity as acceptors for peptidyl transferase. This Ruminiclostridium cellulolyticum (strain ATCC 35319 / DSM 5812 / JCM 6584 / H10) (Clostridium cellulolyticum) protein is Elongation factor P.